A 96-amino-acid polypeptide reads, in one-letter code: Aspartyl/glutamyl-tRNA(Asn/Gln) amidotransferase subunit C (96 aa).

It belongs to the GatC family. In terms of assembly, heterotrimer of A, B and C subunits.

It carries out the reaction L-glutamyl-tRNA(Gln) + L-glutamine + ATP + H2O = L-glutaminyl-tRNA(Gln) + L-glutamate + ADP + phosphate + H(+). The catalysed reaction is L-aspartyl-tRNA(Asn) + L-glutamine + ATP + H2O = L-asparaginyl-tRNA(Asn) + L-glutamate + ADP + phosphate + 2 H(+). Its function is as follows. Allows the formation of correctly charged Asn-tRNA(Asn) or Gln-tRNA(Gln) through the transamidation of misacylated Asp-tRNA(Asn) or Glu-tRNA(Gln) in organisms which lack either or both of asparaginyl-tRNA or glutaminyl-tRNA synthetases. The reaction takes place in the presence of glutamine and ATP through an activated phospho-Asp-tRNA(Asn) or phospho-Glu-tRNA(Gln). The chain is Aspartyl/glutamyl-tRNA(Asn/Gln) amidotransferase subunit C from Bacillus licheniformis (strain ATCC 14580 / DSM 13 / JCM 2505 / CCUG 7422 / NBRC 12200 / NCIMB 9375 / NCTC 10341 / NRRL NRS-1264 / Gibson 46).